The following is a 435-amino-acid chain: Ribulose bisphosphate carboxylase-like protein (435 aa).

Residues Lys-198, Asp-200, and Glu-201 each contribute to the Mg(2+) site. Lys-198 carries the N6-carboxylysine modification.

The protein belongs to the RuBisCO large chain family. Type IV subfamily. Homodimer. Mg(2+) is required as a cofactor.

Its function is as follows. May be involved in sulfur metabolism and oxidative stress response. Does not show RuBisCO activity. The chain is Ribulose bisphosphate carboxylase-like protein from Chlorobaculum tepidum (strain ATCC 49652 / DSM 12025 / NBRC 103806 / TLS) (Chlorobium tepidum).